A 477-amino-acid chain; its full sequence is Ankyrin repeat, SAM and basic leucine zipper domain-containing protein 1 (477 aa).

Residues serine 17, serine 18, and serine 20 each carry the phosphoserine modification. ANK repeat units follow at residues 46 to 76, 80 to 109, 112 to 146, 150 to 179, 183 to 212, and 216 to 245; these read EKKE…SVDA, YGWT…NASF, DKQT…DPNV, RLMT…EVNT, NGYT…NKML, and DGKL…PLEG. Residues 274–336 form the SAM domain; sequence SYAAFGDLEV…KILAALKELE (63 aa).

Interacts with DDX4, PIWIL1, RANBP9 and TDRD1.

Its subcellular location is the cytoplasm. Functionally, plays a central role during spermatogenesis by repressing transposable elements and preventing their mobilization, which is essential for the germline integrity. Acts via the piRNA metabolic process, which mediates the repression of transposable elements during meiosis by forming complexes composed of piRNAs and Piwi proteins and governs the methylation and subsequent repression of transposons. Its association with pi-bodies suggests a participation in the primary piRNAs metabolic process. Required prior to the pachytene stage to facilitate the production of multiple types of piRNAs, including those associated with repeats involved in the regulation of retrotransposons. May act by mediating protein-protein interactions during germ cell maturation. The polypeptide is Ankyrin repeat, SAM and basic leucine zipper domain-containing protein 1 (ASZ1) (Callithrix jacchus (White-tufted-ear marmoset)).